Reading from the N-terminus, the 166-residue chain is MISVATLECFTHGKIGIKIHKMACGYKELQNDFGYDIIRGNVLVTASMFLPSKESIESLLNMKLPKSDHEFKYSKAYNEENDLKVAEYISKALKEKLKCNIAISTTAGVGKGAISILTDKNSYLFTSDIYGNLIKGENILKRQENAVNKAFEAFIKILNEEYNIKE.

Belongs to the UPF0254 family.

The polypeptide is UPF0254 protein Mevan_0254 (Methanococcus vannielii (strain ATCC 35089 / DSM 1224 / JCM 13029 / OCM 148 / SB)).